A 493-amino-acid polypeptide reads, in one-letter code: MQPAGLEGPRALGLRPLGHRLSLLGVLLLVPSLWVTCTLTTPSPSSAPTTPEASNATTAPGIPNDTATSGVTSDPRLREQALALMRDFPLVDGHNDLPLLLRELFQNQLQDVNLRNFTRGQTNLDRLRDGLVGAQFWSAYIPCQTQDRDAVRLALEQIDLIRRMCSAYPELELVTSADGLNNTQKLACLIGVEGGHSLDTSLAVLRSFYELGVRYLTLTFTCSTPWAESATKFRHHFYTNISGLTSFGEKVVEEMNRLGMMIDLSHASDTLVKQTLEVSQAPVIFSHSAARSVCDNLLNIPDDILQLLKKNGGIVMVTLSMGVLQCSLFANVSTVADHFDHIRTVIGSEFIGIGGSYDGSGRFPQGLEDVSTYPVLIEELLSRGWDERELQGVLRGNLLRVFRQVEQVREKSLGQSPVEVKFPERQQSNTCHSHLLPQPQEDQHQDTHLKVTKLPNILQRASKAPPHPLPGLMATLTSLALILWLCCSGHRAV.

The first 35 residues, 1 to 35, serve as a signal peptide directing secretion; that stretch reads MQPAGLEGPRALGLRPLGHRLSLLGVLLLVPSLWV. Low complexity predominate over residues 41-60; the sequence is TPSPSSAPTTPEASNATTAP. Positions 41–74 are disordered; sequence TPSPSSAPTTPEASNATTAPGIPNDTATSGVTSD. 2 disulfides stabilise this stretch: Cys143/Cys222 and Cys294/Cys326. An N-linked (GlcNAc...) asparagine glycan is attached at Asn331. Ser462 is lipidated: GPI-anchor amidated serine. The propeptide at 463-493 is removed in mature form; that stretch reads KAPPHPLPGLMATLTSLALILWLCCSGHRAV.

The protein belongs to the metallo-dependent hydrolases superfamily. Peptidase M19 family. As to quaternary structure, homodimer; disulfide-linked. Interacts with TEX101; co-localized on the cell surface of spermatocytes, spermatids, and testicular spermatozoa, co-localized only in cytoplasmic droplets of caput and corpus epididymal sperm. Expressed in testis but not ovary.

Its subcellular location is the membrane. Its function is as follows. Lacks dipeptidase activity and is unable to hydrolyze cystinyl-bis-glycine. The absence of activity may be due to the inability of serine (instead of aspartate found in DPEP1/2) at position 356 to function as the acid/base catalyst and activate the nucleophilic water/hydroxide. Does not hydrolyze leukotriene D4 (LTD4) into leukotriene E4 (LTE4). Does not hydrolyze the beta-lactam antibiotic imipenem. This is Dipeptidase 3 (Dpep3) from Mus musculus (Mouse).